A 197-amino-acid polypeptide reads, in one-letter code: Endothelial cell-specific chemotaxis regulator (197 aa).

A signal peptide spans 1 to 23 (MGSVRETQLRWAILGFLLLQAAS). Residues 24–113 (ETPSQFSTEA…PSPTSETVLT (90 aa)) lie on the Extracellular side of the membrane. The interval 40-107 (TVADHLPSSP…ADSTVPPSPT (68 aa)) is disordered. Residues 50–63 (GPTWSQSQKHTSGL) are compositionally biased toward polar residues. Low complexity predominate over residues 64–82 (SADVPSSGRSSDSMSGDTS). Residues 83 to 107 (HNVTSTSPNMSFRTTADSTVPPSPT) show a composition bias toward polar residues. Residues 114-134 (VAAFGVISFIAILVVVVIVLV) traverse the membrane as a helical segment. Residues 135 to 197 (SVVSLRFKCR…KGCPSAEKVL (63 aa)) lie on the Cytoplasmic side of the membrane. Disordered regions lie at residues 146 to 172 (NKES…GEKE) and 178 to 197 (SMKN…EKVL). Composition is skewed to polar residues over residues 155–168 (PGSS…STAN) and 178–189 (SMKNINMNNSKG). Serine 187 carries the post-translational modification Phosphoserine.

The protein belongs to the ECSCR family. Interacts with FLNA. Interacts with the 20S proteasome subunit PSMA7. Post-translationally, may be heavily O-glycosylated.

It is found in the cell membrane. Its subcellular location is the cytoplasm. Regulates endothelial chemotaxis and tube formation. Has a role in angiogenesis and apoptosis via modulation of the actin cytoskeleton and facilitation of proteasomal degradation of the apoptosis inhibitors BIRC3/IAP1 and BIRC2/IAP2. The chain is Endothelial cell-specific chemotaxis regulator (ECSCR) from Bos taurus (Bovine).